A 603-amino-acid chain; its full sequence is Cholinesterase (603 aa).

A signal peptide spans 1 to 29; sequence MQTQHTKVTQTHFLLWILLLCMPFGKSHT. N86 is a glycosylation site (N-linked (GlcNAc...) asparagine). A disulfide bridge links C94 with C121. N-linked (GlcNAc...) asparagine glycosylation occurs at N135. 145–146 lines the substrate pocket; sequence GG. S227 acts as the Acyl-ester intermediate in catalysis. The residue at position 227 (S227) is a Phosphoserine. N270 carries N-linked (GlcNAc...) asparagine glycosylation. An intrachain disulfide couples C281 to C292. Residue E354 is the Charge relay system of the active site. N-linked (GlcNAc...) asparagine glycosylation is present at N370. A disulfide bond links C429 and C548. The Charge relay system role is filled by H467. Residues N484, N510, and N515 are each glycosylated (N-linked (GlcNAc...) asparagine).

This sequence belongs to the type-B carboxylesterase/lipase family. Homotetramer; disulfide-linked. Dimer of dimers. As to expression, present in most cells except erythrocytes.

Its subcellular location is the secreted. The catalysed reaction is an acylcholine + H2O = a carboxylate + choline + H(+). In terms of biological role, esterase with broad substrate specificity. Contributes to the inactivation of the neurotransmitter acetylcholine. Can degrade neurotoxic organophosphate esters. In Mus musculus (Mouse), this protein is Cholinesterase (Bche).